The chain runs to 374 residues: Putative glutamate--cysteine ligase 2-1 (374 aa).

It belongs to the glutamate--cysteine ligase type 2 family. YbdK subfamily.

It catalyses the reaction L-cysteine + L-glutamate + ATP = gamma-L-glutamyl-L-cysteine + ADP + phosphate + H(+). In terms of biological role, ATP-dependent carboxylate-amine ligase which exhibits weak glutamate--cysteine ligase activity. The chain is Putative glutamate--cysteine ligase 2-1 from Saccharopolyspora erythraea (strain ATCC 11635 / DSM 40517 / JCM 4748 / NBRC 13426 / NCIMB 8594 / NRRL 2338).